The primary structure comprises 216 residues: 2',3'-cyclic-nucleotide 3'-phosphodiesterase (216 aa).

The active-site Proton donor/acceptor is the histidine 39. Threonine 41 is a binding site for substrate. The Proton donor/acceptor role is filled by histidine 153. Residues serine 155 and tyrosine 158 each coordinate substrate.

Belongs to the 2H phosphoesterase superfamily. CPD1 family.

The protein localises to the golgi apparatus. The catalysed reaction is a nucleoside 2',3'-cyclic phosphate + H2O = a nucleoside 2'-phosphate + H(+). Its function is as follows. Involved in the metabolism of ADP-ribose 1',2'-cyclic phosphate which is produced as a consequence of tRNA splicing. The sequence is that of 2',3'-cyclic-nucleotide 3'-phosphodiesterase (CPD1) from Yarrowia lipolytica (strain CLIB 122 / E 150) (Yeast).